The sequence spans 105 residues: Guanidinium exporter (105 aa).

Residues 1 to 21 form a helical membrane-spanning segment; it reads MSWIILVIAGLLEVVWAVGLK. The Cytoplasmic segment spans residues 22–28; sequence YTHGFSR. A helical transmembrane segment spans residues 29–49; sequence LTPSVITVTAMIVSMALLAWA. The Periplasmic portion of the chain corresponds to 50-57; the sequence is MKSLPVGT. Residues 58 to 78 traverse the membrane as a helical segment; sequence AYAVWTGIGAVGAAITGIVLL. The Cytoplasmic portion of the chain corresponds to 79 to 81; the sequence is GES. A helical transmembrane segment spans residues 82–102; it reads ANPMRLASLALIVLGIIGLKL. The Periplasmic segment spans residues 103-105; sequence STH.

This sequence belongs to the drug/metabolite transporter (DMT) superfamily. Small multidrug resistance (SMR) (TC 2.A.7.1) family. Gdx/SugE subfamily.

Its subcellular location is the cell inner membrane. In terms of biological role, guanidinium ion exporter. Couples guanidinium export to the proton motive force, exchanging one guanidinium ion for two protons. This is Guanidinium exporter from Escherichia coli O157:H7.